The following is a 320-amino-acid chain: o-succinylbenzoate synthase (320 aa).

Residue Lys-133 is the Proton donor of the active site. Mg(2+) is bound by residues Asp-161, Glu-190, and Asp-213. The active-site Proton acceptor is the Lys-235.

It belongs to the mandelate racemase/muconate lactonizing enzyme family. MenC type 1 subfamily. A divalent metal cation is required as a cofactor.

The enzyme catalyses (1R,6R)-6-hydroxy-2-succinyl-cyclohexa-2,4-diene-1-carboxylate = 2-succinylbenzoate + H2O. The protein operates within quinol/quinone metabolism; 1,4-dihydroxy-2-naphthoate biosynthesis; 1,4-dihydroxy-2-naphthoate from chorismate: step 4/7. It functions in the pathway quinol/quinone metabolism; menaquinone biosynthesis. Functionally, converts 2-succinyl-6-hydroxy-2,4-cyclohexadiene-1-carboxylate (SHCHC) to 2-succinylbenzoate (OSB). The sequence is that of o-succinylbenzoate synthase from Salmonella newport (strain SL254).